We begin with the raw amino-acid sequence, 239 residues long: MYAQEAQQKPEAQQSAPAAEQPKPAEEQAKPEQHVTNPNAAVGKELSEASHAAEGEEEAGEHMELKHSTMVKTLAKWLGVSVETSYWIAMAFNFAIVFALLGWAMKKNLPGVFKARNESIQRGIAEARAASDDAKRRLADIEARLSKMDGEVAAIRAVTEKESAAEEVRIREAAEADVKRILESAENEIDAATKQARRDLKSLAAGLAIDLATRKLHVDQQTDESLVRSFVAQLGKDGK.

Positions 1–22 are enriched in low complexity; sequence MYAQEAQQKPEAQQSAPAAEQP. The interval 1-64 is disordered; it reads MYAQEAQQKP…GEEEAGEHME (64 aa). Composition is skewed to basic and acidic residues over residues 23-33 and 45-64; these read KPAEEQAKPEQ and ELSE…EHME. Residues 85–105 form a helical membrane-spanning segment; that stretch reads SYWIAMAFNFAIVFALLGWAM.

This sequence belongs to the ATPase B chain family. As to quaternary structure, F-type ATPases have 2 components, F(1) - the catalytic core - and F(0) - the membrane proton channel. F(1) has five subunits: alpha(3), beta(3), gamma(1), delta(1), epsilon(1). F(0) has three main subunits: a(1), b(2) and c(10-14). The alpha and beta chains form an alternating ring which encloses part of the gamma chain. F(1) is attached to F(0) by a central stalk formed by the gamma and epsilon chains, while a peripheral stalk is formed by the delta and b chains.

Its subcellular location is the cell inner membrane. In terms of biological role, f(1)F(0) ATP synthase produces ATP from ADP in the presence of a proton or sodium gradient. F-type ATPases consist of two structural domains, F(1) containing the extramembraneous catalytic core and F(0) containing the membrane proton channel, linked together by a central stalk and a peripheral stalk. During catalysis, ATP synthesis in the catalytic domain of F(1) is coupled via a rotary mechanism of the central stalk subunits to proton translocation. Component of the F(0) channel, it forms part of the peripheral stalk, linking F(1) to F(0). The sequence is that of ATP synthase subunit b from Koribacter versatilis (strain Ellin345).